Reading from the N-terminus, the 86-residue chain is U15-lycotoxin-Ls1c (86 aa).

Positions 1–20 (MNSKIFAVLLLLAFLSCVLS) are cleaved as a signal peptide. Residues 21 to 66 (DQYCPKSSITACKKMNIRNDCCKDDDCTGGSWCCATPCGNICKYPT) enclose the WAP domain. Intrachain disulfides connect Cys-24–Cys-54, Cys-32–Cys-58, Cys-41–Cys-53, Cys-42–Cys-80, and Cys-47–Cys-62.

It belongs to the venom protein 11 family. 01 (wap-1) subfamily. Post-translationally, contains 5 disulfide bonds. As to expression, expressed by the venom gland.

The protein localises to the secreted. Has antibacterial activity. This Lycosa singoriensis (Wolf spider) protein is U15-lycotoxin-Ls1c.